The following is a 591-amino-acid chain: CTP synthase 1 (591 aa).

Lysine 100 is subject to N6-acetyllysine. The 255-residue stretch at 300–554 (SIALVGKYTK…LASVGRLSHY (255 aa)) folds into the Glutamine amidotransferase type-1 domain. Catalysis depends on for GATase activity residues cysteine 399, histidine 526, and glutamate 528. Residues serine 562, serine 568, serine 571, serine 573, serine 574, serine 575, serine 578, and serine 587 each carry the phosphoserine modification. A disordered region spans residues 562 to 591 (SPRDTYSDRSGSSSPDSEITELKFPSINHD). A compositionally biased stretch (low complexity) spans 569–578 (DRSGSSSPDS).

It belongs to the CTP synthase family. In terms of tissue distribution, widely expressed.

It localises to the cytoplasm. The protein localises to the cytosol. The enzyme catalyses UTP + L-glutamine + ATP + H2O = CTP + L-glutamate + ADP + phosphate + 2 H(+). Its pathway is pyrimidine metabolism; CTP biosynthesis via de novo pathway; CTP from UDP: step 2/2. With respect to regulation, activated by GTP and inhibited by CTP. Functionally, this enzyme is involved in the de novo synthesis of CTP, a precursor of DNA, RNA and phospholipids. Catalyzes the ATP-dependent amination of UTP to CTP with either L-glutamine or ammonia as a source of nitrogen. This enzyme and its product, CTP, play a crucial role in the proliferation of activated lymphocytes and therefore in immunity. The sequence is that of CTP synthase 1 from Homo sapiens (Human).